A 328-amino-acid chain; its full sequence is Malate dehydrogenase (328 aa).

11 to 17 contacts NAD(+); the sequence is GAAGQIG. Arginine 94 and arginine 100 together coordinate substrate. NAD(+) is bound by residues asparagine 107, glutamine 114, and 131-133; that span reads VGN. The substrate site is built by asparagine 133 and arginine 164. Catalysis depends on histidine 189, which acts as the Proton acceptor.

This sequence belongs to the LDH/MDH superfamily. MDH type 2 family.

It catalyses the reaction (S)-malate + NAD(+) = oxaloacetate + NADH + H(+). In terms of biological role, catalyzes the reversible oxidation of malate to oxaloacetate. The sequence is that of Malate dehydrogenase from Xanthomonas euvesicatoria pv. vesicatoria (strain 85-10) (Xanthomonas campestris pv. vesicatoria).